A 212-amino-acid polypeptide reads, in one-letter code: Penicillin-binding protein activator LpoB (212 aa).

The N-terminal stretch at 1–19 (MTKMHRYAAIAALAIFLSG) is a signal peptide. Cys-20 is lipidated: N-palmitoyl cysteine. Cys-20 carries S-diacylglycerol cysteine lipidation. Residues 28–73 (PVEEVKPAPEQPAQPPQPPVVPSVPTIPQQPGPIEHEDQTGQPAPK) form a disordered region. The span at 36-49 (PEQPAQPPQPPVVP) shows a compositional bias: pro residues.

The protein belongs to the LpoB family. In terms of assembly, interacts with PBP1b.

The protein resides in the cell outer membrane. Regulator of peptidoglycan synthesis that is essential for the function of penicillin-binding protein 1B (PBP1b). The polypeptide is Penicillin-binding protein activator LpoB (Salmonella typhimurium (strain LT2 / SGSC1412 / ATCC 700720)).